Here is a 291-residue protein sequence, read N- to C-terminus: ATP synthase gamma chain (291 aa).

The protein belongs to the ATPase gamma chain family. In terms of assembly, F-type ATPases have 2 components, CF(1) - the catalytic core - and CF(0) - the membrane proton channel. CF(1) has five subunits: alpha(3), beta(3), gamma(1), delta(1), epsilon(1). CF(0) has three main subunits: a, b and c.

It is found in the cell inner membrane. Produces ATP from ADP in the presence of a proton gradient across the membrane. The gamma chain is believed to be important in regulating ATPase activity and the flow of protons through the CF(0) complex. The polypeptide is ATP synthase gamma chain (Ruegeria sp. (strain TM1040) (Silicibacter sp.)).